The following is a 204-amino-acid chain: Thymidylate kinase (204 aa).

An ATP-binding site is contributed by 13 to 20 (GIDGSGKS).

Belongs to the thymidylate kinase family.

It catalyses the reaction dTMP + ATP = dTDP + ADP. Functionally, phosphorylation of dTMP to form dTDP in both de novo and salvage pathways of dTTP synthesis. This chain is Thymidylate kinase, found in Leptospira interrogans serogroup Icterohaemorrhagiae serovar copenhageni (strain Fiocruz L1-130).